Here is a 120-residue protein sequence, read N- to C-terminus: Aspartate 1-decarboxylase (120 aa).

Ser25 functions as the Schiff-base intermediate with substrate; via pyruvic acid in the catalytic mechanism. Ser25 is modified (pyruvic acid (Ser)). Thr57 is a substrate binding site. Residue Tyr58 is the Proton donor of the active site. Residue 73-75 (GAA) participates in substrate binding.

It belongs to the PanD family. As to quaternary structure, heterooctamer of four alpha and four beta subunits. Pyruvate is required as a cofactor. In terms of processing, is synthesized initially as an inactive proenzyme, which is activated by self-cleavage at a specific serine bond to produce a beta-subunit with a hydroxyl group at its C-terminus and an alpha-subunit with a pyruvoyl group at its N-terminus.

Its subcellular location is the cytoplasm. The enzyme catalyses L-aspartate + H(+) = beta-alanine + CO2. The protein operates within cofactor biosynthesis; (R)-pantothenate biosynthesis; beta-alanine from L-aspartate: step 1/1. Functionally, catalyzes the pyruvoyl-dependent decarboxylation of aspartate to produce beta-alanine. The protein is Aspartate 1-decarboxylase of Cupriavidus taiwanensis (strain DSM 17343 / BCRC 17206 / CCUG 44338 / CIP 107171 / LMG 19424 / R1) (Ralstonia taiwanensis (strain LMG 19424)).